A 513-amino-acid polypeptide reads, in one-letter code: ATP synthase subunit alpha (513 aa).

An ATP-binding site is contributed by 169 to 176 (GDRQCGKT).

Belongs to the ATPase alpha/beta chains family. As to quaternary structure, F-type ATPases have 2 components, CF(1) - the catalytic core - and CF(0) - the membrane proton channel. CF(1) has five subunits: alpha(3), beta(3), gamma(1), delta(1), epsilon(1). CF(0) has three main subunits: a(1), b(2) and c(9-12). The alpha and beta chains form an alternating ring which encloses part of the gamma chain. CF(1) is attached to CF(0) by a central stalk formed by the gamma and epsilon chains, while a peripheral stalk is formed by the delta and b chains.

The protein resides in the cell inner membrane. The enzyme catalyses ATP + H2O + 4 H(+)(in) = ADP + phosphate + 5 H(+)(out). Produces ATP from ADP in the presence of a proton gradient across the membrane. The alpha chain is a regulatory subunit. This chain is ATP synthase subunit alpha, found in Burkholderia cenocepacia (strain ATCC BAA-245 / DSM 16553 / LMG 16656 / NCTC 13227 / J2315 / CF5610) (Burkholderia cepacia (strain J2315)).